Here is a 293-residue protein sequence, read N- to C-terminus: 3-hydroxybutyrate-oligomer hydrolase (293 aa).

It belongs to the AB hydrolase superfamily.

The protein localises to the cytoplasm. It carries out the reaction (3R)-hydroxybutanoate pentamer + H2O = (3R)-hydroxybutanoate tetramer + (R)-3-hydroxybutanoate + H(+). The enzyme catalyses (3R)-hydroxybutanoate tetramer + H2O = (3R)-hydroxybutanoate trimer + (R)-3-hydroxybutanoate + H(+). The catalysed reaction is (3R)-hydroxybutanoate trimer + H2O = (3R)-hydroxybutanoate dimer + (R)-3-hydroxybutanoate + H(+). It catalyses the reaction (3R)-hydroxybutanoate dimer + H2O = 2 (R)-3-hydroxybutanoate + H(+). It carries out the reaction [(3R)-hydroxybutanoate](n) + H2O = [(3R)-hydroxybutanoate](n-1) + (R)-3-hydroxybutanoate + H(+). Functionally, catalyzes the degradation of various 3-hydroxybutyrate (3HB) oligomers at a high specific activity and artificial amorphous poly(3-hydroxybutyrate) (PHB) at a lower specific activity. Hydrolyzes the 3HB pentamer most efficiently than the tetramer, trimer and dimer. Does not hydrolyze native PHB granules and semicrystalline PHB. Participates in the mobilization of PHB along with other hydrolases. The sequence is that of 3-hydroxybutyrate-oligomer hydrolase from Cupriavidus necator (strain ATCC 17699 / DSM 428 / KCTC 22496 / NCIMB 10442 / H16 / Stanier 337) (Ralstonia eutropha).